The primary structure comprises 551 residues: Tetrachloroethene reductive dehalogenase (551 aa).

A signal peptide (tat-type signal) is located at residues 1–39 (MGEINRRNFLKVSILGAAAAAVASASAVKGMVSPLVADA). In terms of domain architecture, 4Fe-4S ferredoxin-type 1 spans 411 to 440 (PRKFGVREFCRLCKKCADACPAQAISHEKD). 8 residues coordinate [4Fe-4S] cluster: C420, C423, C426, C430, C467, C478, C481, and C485. A 4Fe-4S ferredoxin-type 2 domain is found at 478 to 496 (CSNCVAVCSWNKVETWNHD).

It belongs to the PceA family. [4Fe-4S] cluster serves as cofactor. It depends on corrinoid as a cofactor. In terms of processing, predicted to be exported by the Tat system. The position of the signal peptide cleavage has not been experimentally proven.

It is found in the cell membrane. The catalysed reaction is trichloroethene + chloride + A + H(+) = tetrachloroethene + AH2. It carries out the reaction trichloroethene + AH2 = (Z)-1,2-dichloroethene + chloride + A + H(+). Catalyzes the reductive dechlorination of tetrachloroethene (PCE) to trichloroethene (TCE) and of trichloroethene to cis-1,2-dichloroethene (DCE). In Desulfitobacterium hafniense (Desulfitobacterium frappieri), this protein is Tetrachloroethene reductive dehalogenase.